The following is a 365-amino-acid chain: Putative 2-dehydropantoate 2-reductase (365 aa).

It belongs to the ketopantoate reductase family.

The catalysed reaction is (R)-pantoate + NADP(+) = 2-dehydropantoate + NADPH + H(+). The protein operates within cofactor biosynthesis; (R)-pantothenate biosynthesis; (R)-pantoate from 3-methyl-2-oxobutanoate: step 2/2. Catalyzes the NADPH-dependent reduction of ketopantoate into pantoic acid. This chain is Putative 2-dehydropantoate 2-reductase (KPR), found in Arabidopsis thaliana (Mouse-ear cress).